We begin with the raw amino-acid sequence, 336 residues long: Pyridoxal 5'-phosphate synthase subunit PdxS (336 aa).

Residue D30 participates in D-ribose 5-phosphate binding. The Schiff-base intermediate with D-ribose 5-phosphate role is filled by K87. G159 contacts D-ribose 5-phosphate. R171 contributes to the D-glyceraldehyde 3-phosphate binding site. Residues G257 and 278–279 contribute to the D-ribose 5-phosphate site; that span reads GS.

Belongs to the PdxS/SNZ family. As to quaternary structure, in the presence of PdxT, forms a dodecamer of heterodimers.

It catalyses the reaction aldehydo-D-ribose 5-phosphate + D-glyceraldehyde 3-phosphate + L-glutamine = pyridoxal 5'-phosphate + L-glutamate + phosphate + 3 H2O + H(+). The protein operates within cofactor biosynthesis; pyridoxal 5'-phosphate biosynthesis. Its function is as follows. Catalyzes the formation of pyridoxal 5'-phosphate from ribose 5-phosphate (RBP), glyceraldehyde 3-phosphate (G3P) and ammonia. The ammonia is provided by the PdxT subunit. Can also use ribulose 5-phosphate and dihydroxyacetone phosphate as substrates, resulting from enzyme-catalyzed isomerization of RBP and G3P, respectively. This Thermoplasma acidophilum (strain ATCC 25905 / DSM 1728 / JCM 9062 / NBRC 15155 / AMRC-C165) protein is Pyridoxal 5'-phosphate synthase subunit PdxS.